The following is a 1462-amino-acid chain: FYVE, RhoGEF and PH domain-containing protein 5 (1462 aa).

Disordered stretches follow at residues 37–323 (GRLP…SAEE), 492–512 (YVPETVPEETGPEAGSSAPGI), 592–613 (SGSFSQRNHLPSSGTSTPSSMV), 670–718 (HVDV…ASES), 746–777 (EDRSRPPFLPLPLTKPRSISFPSADTSDYENI), and 851–887 (CPISSAAPKEDLTSDEEQRSSEEEDSASRDPSVTHKV). A compositionally biased stretch (basic and acidic residues) spans 72-82 (PLREDEPKDEG). 2 stretches are compositionally biased toward acidic residues: residues 95-106 (SAEEEEEREEGG) and 137-151 (EGTDLALEDEGEGCA). The span at 161-177 (SRSEEEEKLVQPHRECS) shows a compositional bias: basic and acidic residues. Composition is skewed to acidic residues over residues 211–220 (GEAEEDDEEG) and 242–255 (MGQDAEDTSEEPPE). Polar residues predominate over residues 592–611 (SGSFSQRNHLPSSGTSTPSS). Positions 676–685 (SSSRSSSESS) are enriched in low complexity. Residues 858–887 (PKEDLTSDEEQRSSEEEDSASRDPSVTHKV) show a composition bias toward basic and acidic residues. The region spanning 892–1084 (RALVIAQELL…SKVTDRANDS (193 aa)) is the DH domain. The PH 1 domain occupies 1113 to 1207 (EFLKEGTLMK…WYGCLSRALP (95 aa)). Residues 1242–1301 (VTHVMMCMNCGCDFSLTLRRHHCHACGKIVCRNCSRNKYPLKYLKDRMAKVCDGCFGELK) form an FYVE-type zinc finger. Zn(2+)-binding residues include cysteine 1248, cysteine 1251, cysteine 1264, cysteine 1267, cysteine 1272, cysteine 1275, cysteine 1293, and cysteine 1296. Residues 1363–1461 (GSAISGYLSR…WIEAMEDASV (99 aa)) enclose the PH 2 domain.

In terms of tissue distribution, expressed in endothelial cells (at protein level).

Its subcellular location is the cytoplasm. The protein resides in the cytoskeleton. It localises to the cell projection. It is found in the ruffle membrane. The protein localises to the endoplasmic reticulum. Its subcellular location is the golgi apparatus. The protein resides in the early endosome. Activates CDC42, a member of the Ras-like family of Rho- and Rac proteins, by exchanging bound GDP for free GTP. Mediates VEGF-induced CDC42 activation. May regulate proangiogenic action of VEGF in vascular endothelial cells, including network formation, directional movement and proliferation. May play a role in regulating the actin cytoskeleton and cell shape. The chain is FYVE, RhoGEF and PH domain-containing protein 5 (FGD5) from Homo sapiens (Human).